Consider the following 275-residue polypeptide: Large ribosomal subunit protein uL2 (275 aa).

A disordered region spans residues 223-275 (VVMNPVDHPHGGGEGKSSGGRHPVSPWGMPTKGYKTRKNKGTDQYIVRRRNKK).

It belongs to the universal ribosomal protein uL2 family. Part of the 50S ribosomal subunit. Forms a bridge to the 30S subunit in the 70S ribosome.

Its function is as follows. One of the primary rRNA binding proteins. Required for association of the 30S and 50S subunits to form the 70S ribosome, for tRNA binding and peptide bond formation. It has been suggested to have peptidyltransferase activity; this is somewhat controversial. Makes several contacts with the 16S rRNA in the 70S ribosome. This Psychromonas ingrahamii (strain DSM 17664 / CCUG 51855 / 37) protein is Large ribosomal subunit protein uL2.